The chain runs to 94 residues: Large ribosomal subunit protein bL28 (94 aa).

This sequence belongs to the bacterial ribosomal protein bL28 family.

In Maricaulis maris (strain MCS10) (Caulobacter maris), this protein is Large ribosomal subunit protein bL28.